Consider the following 151-residue polypeptide: tRNA-specific adenosine deaminase (151 aa).

The region spanning 1–111 is the CMP/dCMP-type deaminase domain; sequence MGKEYFLKVA…LDKKHGGVVS (111 aa). A Zn(2+)-binding site is contributed by H52. The active-site Proton donor is the E54. Residues C82 and C85 each coordinate Zn(2+).

This sequence belongs to the cytidine and deoxycytidylate deaminase family. In terms of assembly, homodimer. Zn(2+) is required as a cofactor.

The enzyme catalyses adenosine(34) in tRNA + H2O + H(+) = inosine(34) in tRNA + NH4(+). Its function is as follows. Catalyzes the deamination of adenosine to inosine at the wobble position 34 of tRNA(Arg2). The polypeptide is tRNA-specific adenosine deaminase (Aquifex aeolicus (strain VF5)).